Reading from the N-terminus, the 351-residue chain is Holliday junction branch migration complex subunit RuvB (351 aa).

Residues 1 to 189 (MTAHDADWSD…FGFTAHMDFY (189 aa)) form a large ATPase domain (RuvB-L) region. ATP-binding positions include leucine 28, arginine 29, glycine 70, lysine 73, threonine 74, serine 75, 136–138 (EDF), arginine 179, tyrosine 189, and arginine 226. Threonine 74 contacts Mg(2+). The small ATPAse domain (RuvB-S) stretch occupies residues 190-260 (EPAELQQVLA…VAKAALAVYD (71 aa)). The segment at 263 to 351 (ELGLDRLDRA…AGLGQPGLFD (89 aa)) is head domain (RuvB-H). Arginine 318 and arginine 323 together coordinate DNA.

It belongs to the RuvB family. As to quaternary structure, homohexamer. Forms an RuvA(8)-RuvB(12)-Holliday junction (HJ) complex. HJ DNA is sandwiched between 2 RuvA tetramers; dsDNA enters through RuvA and exits via RuvB. An RuvB hexamer assembles on each DNA strand where it exits the tetramer. Each RuvB hexamer is contacted by two RuvA subunits (via domain III) on 2 adjacent RuvB subunits; this complex drives branch migration. In the full resolvosome a probable DNA-RuvA(4)-RuvB(12)-RuvC(2) complex forms which resolves the HJ.

Its subcellular location is the cytoplasm. It carries out the reaction ATP + H2O = ADP + phosphate + H(+). Its function is as follows. The RuvA-RuvB-RuvC complex processes Holliday junction (HJ) DNA during genetic recombination and DNA repair, while the RuvA-RuvB complex plays an important role in the rescue of blocked DNA replication forks via replication fork reversal (RFR). RuvA specifically binds to HJ cruciform DNA, conferring on it an open structure. The RuvB hexamer acts as an ATP-dependent pump, pulling dsDNA into and through the RuvAB complex. RuvB forms 2 homohexamers on either side of HJ DNA bound by 1 or 2 RuvA tetramers; 4 subunits per hexamer contact DNA at a time. Coordinated motions by a converter formed by DNA-disengaged RuvB subunits stimulates ATP hydrolysis and nucleotide exchange. Immobilization of the converter enables RuvB to convert the ATP-contained energy into a lever motion, pulling 2 nucleotides of DNA out of the RuvA tetramer per ATP hydrolyzed, thus driving DNA branch migration. The RuvB motors rotate together with the DNA substrate, which together with the progressing nucleotide cycle form the mechanistic basis for DNA recombination by continuous HJ branch migration. Branch migration allows RuvC to scan DNA until it finds its consensus sequence, where it cleaves and resolves cruciform DNA. The polypeptide is Holliday junction branch migration complex subunit RuvB (Mycobacterium avium (strain 104)).